A 184-amino-acid chain; its full sequence is ATP synthase subunit delta (184 aa).

Belongs to the ATPase delta chain family. In terms of assembly, F-type ATPases have 2 components, F(1) - the catalytic core - and F(0) - the membrane proton channel. F(1) has five subunits: alpha(3), beta(3), gamma(1), delta(1), epsilon(1). F(0) has three main subunits: a(1), b(2) and c(10-14). The alpha and beta chains form an alternating ring which encloses part of the gamma chain. F(1) is attached to F(0) by a central stalk formed by the gamma and epsilon chains, while a peripheral stalk is formed by the delta and b chains.

Its subcellular location is the cell inner membrane. Its function is as follows. F(1)F(0) ATP synthase produces ATP from ADP in the presence of a proton or sodium gradient. F-type ATPases consist of two structural domains, F(1) containing the extramembraneous catalytic core and F(0) containing the membrane proton channel, linked together by a central stalk and a peripheral stalk. During catalysis, ATP synthesis in the catalytic domain of F(1) is coupled via a rotary mechanism of the central stalk subunits to proton translocation. Functionally, this protein is part of the stalk that links CF(0) to CF(1). It either transmits conformational changes from CF(0) to CF(1) or is implicated in proton conduction. This Caulobacter vibrioides (strain NA1000 / CB15N) (Caulobacter crescentus) protein is ATP synthase subunit delta.